A 146-amino-acid polypeptide reads, in one-letter code: Putative pre-16S rRNA nuclease (146 aa).

The protein belongs to the YqgF nuclease family.

Its subcellular location is the cytoplasm. Functionally, could be a nuclease involved in processing of the 5'-end of pre-16S rRNA. The chain is Putative pre-16S rRNA nuclease from Pseudomonas syringae pv. syringae (strain B728a).